Reading from the N-terminus, the 503-residue chain is Maturase K (503 aa).

This sequence belongs to the intron maturase 2 family. MatK subfamily.

It localises to the plastid. The protein resides in the chloroplast. Its function is as follows. Usually encoded in the trnK tRNA gene intron. Probably assists in splicing its own and other chloroplast group II introns. This chain is Maturase K, found in Vicia villosa (Hairy vetch).